The chain runs to 355 residues: Putative testis-specific Y-encoded-like protein 3 (355 aa).

Residues 1-131 form a disordered region; that stretch reads MADKRAGTPE…GEEKQEVAAE (131 aa). Over residues 93 to 128 the composition is skewed to basic and acidic residues; it reads ASEKAEDANKEEGAIFKKEPAEEVEKQQEGEEKQEV.

The protein belongs to the nucleosome assembly protein (NAP) family.

This Homo sapiens (Human) protein is Putative testis-specific Y-encoded-like protein 3 (TSPY26P).